The sequence spans 209 residues: Kynurenine formamidase (209 aa).

Trp20 is a substrate binding site. Residues His50, His54, and Asp56 each contribute to the Zn(2+) site. His60 (proton donor/acceptor) is an active-site residue. Zn(2+) contacts are provided by His161 and Glu173.

Belongs to the Cyclase 1 superfamily. KynB family. In terms of assembly, homodimer. The cofactor is Zn(2+).

The enzyme catalyses N-formyl-L-kynurenine + H2O = L-kynurenine + formate + H(+). It participates in amino-acid degradation; L-tryptophan degradation via kynurenine pathway; L-kynurenine from L-tryptophan: step 2/2. In terms of biological role, catalyzes the hydrolysis of N-formyl-L-kynurenine to L-kynurenine, the second step in the kynurenine pathway of tryptophan degradation. The protein is Kynurenine formamidase of Bacillus thuringiensis (strain Al Hakam).